Reading from the N-terminus, the 417-residue chain is DnaJ protein homolog ANJ1 (417 aa).

A J domain is found at 11–76 (STRYYEILGV…REIYDQYGED (66 aa)). A CR-type zinc finger spans residues 135–219 (GTTKKLSLSR…CKGEKVVQEK (85 aa)). 3 CXXCXGXG motif repeats span residues 148-155 (CSKCTGKG), 164-171 (CSGCQGTG), and 191-198 (CNECKGTG). A CXXCXGXG motif; approximate repeat occupies 207-214 (CPQCKGEK). Positions 384–417 (IEEEMKRKQTQAQQEAYDEDDEPAGGQRVQCAQQ) are disordered. Residue C414 is modified to Cysteine methyl ester. Residue C414 is the site of S-farnesyl cysteine attachment. A propeptide spans 415-417 (AQQ) (removed in mature form).

Its subcellular location is the membrane. Its function is as follows. Plays a continuous role in plant development probably in the structural organization of compartments. The protein is DnaJ protein homolog ANJ1 of Atriplex nummularia (Old man saltbush).